A 361-amino-acid chain; its full sequence is tRNA 2-selenouridine synthase (361 aa).

Positions 12–135 (VLKNIPLIDV…FRRYLIDHLE (124 aa)) constitute a Rhodanese domain. Cysteine 95 serves as the catalytic S-selanylcysteine intermediate.

Belongs to the SelU family. In terms of assembly, monomer.

It carries out the reaction 5-methylaminomethyl-2-thiouridine(34) in tRNA + selenophosphate + (2E)-geranyl diphosphate + H2O + H(+) = 5-methylaminomethyl-2-selenouridine(34) in tRNA + (2E)-thiogeraniol + phosphate + diphosphate. It catalyses the reaction 5-methylaminomethyl-2-thiouridine(34) in tRNA + (2E)-geranyl diphosphate = 5-methylaminomethyl-S-(2E)-geranyl-thiouridine(34) in tRNA + diphosphate. The catalysed reaction is 5-methylaminomethyl-S-(2E)-geranyl-thiouridine(34) in tRNA + selenophosphate + H(+) = 5-methylaminomethyl-2-(Se-phospho)selenouridine(34) in tRNA + (2E)-thiogeraniol. The enzyme catalyses 5-methylaminomethyl-2-(Se-phospho)selenouridine(34) in tRNA + H2O = 5-methylaminomethyl-2-selenouridine(34) in tRNA + phosphate. Its function is as follows. Involved in the post-transcriptional modification of the uridine at the wobble position (U34) of tRNA(Lys), tRNA(Glu) and tRNA(Gln). Catalyzes the conversion of 2-thiouridine (S2U-RNA) to 2-selenouridine (Se2U-RNA). Acts in a two-step process involving geranylation of 2-thiouridine (S2U) to S-geranyl-2-thiouridine (geS2U) and subsequent selenation of the latter derivative to 2-selenouridine (Se2U) in the tRNA chain. The chain is tRNA 2-selenouridine synthase from Hydrogenovibrio crunogenus (strain DSM 25203 / XCL-2) (Thiomicrospira crunogena).